The primary structure comprises 160 residues: Putative pre-16S rRNA nuclease (160 aa).

This sequence belongs to the YqgF nuclease family.

The protein resides in the cytoplasm. Could be a nuclease involved in processing of the 5'-end of pre-16S rRNA. The chain is Putative pre-16S rRNA nuclease from Cereibacter sphaeroides (strain KD131 / KCTC 12085) (Rhodobacter sphaeroides).